The sequence spans 380 residues: Chaperone protein DnaJ (380 aa).

One can recognise a J domain in the interval 5-70 (DYYEVLGVSK…QKRQTYDQYG (66 aa)). A CR-type zinc finger spans residues 136–214 (GKEVEIKIPT…CHGQGRVEKT (79 aa)). Zn(2+) is bound by residues cysteine 149, cysteine 152, cysteine 166, cysteine 169, cysteine 188, cysteine 191, cysteine 202, and cysteine 205. CXXCXGXG motif repeat units lie at residues 149 to 156 (CDPCDGSG), 166 to 173 (CTTCHGAG), 188 to 195 (CPTCQGQG), and 202 to 209 (CDSCHGQG).

This sequence belongs to the DnaJ family. Homodimer. Zn(2+) serves as cofactor.

Its subcellular location is the cytoplasm. In terms of biological role, participates actively in the response to hyperosmotic and heat shock by preventing the aggregation of stress-denatured proteins and by disaggregating proteins, also in an autonomous, DnaK-independent fashion. Unfolded proteins bind initially to DnaJ; upon interaction with the DnaJ-bound protein, DnaK hydrolyzes its bound ATP, resulting in the formation of a stable complex. GrpE releases ADP from DnaK; ATP binding to DnaK triggers the release of the substrate protein, thus completing the reaction cycle. Several rounds of ATP-dependent interactions between DnaJ, DnaK and GrpE are required for fully efficient folding. Also involved, together with DnaK and GrpE, in the DNA replication of plasmids through activation of initiation proteins. The chain is Chaperone protein DnaJ from Pseudoalteromonas translucida (strain TAC 125).